The primary structure comprises 420 residues: Gamma-glutamyl phosphate reductase (420 aa).

This sequence belongs to the gamma-glutamyl phosphate reductase family.

Its subcellular location is the cytoplasm. The catalysed reaction is L-glutamate 5-semialdehyde + phosphate + NADP(+) = L-glutamyl 5-phosphate + NADPH + H(+). It participates in amino-acid biosynthesis; L-proline biosynthesis; L-glutamate 5-semialdehyde from L-glutamate: step 2/2. Functionally, catalyzes the NADPH-dependent reduction of L-glutamate 5-phosphate into L-glutamate 5-semialdehyde and phosphate. The product spontaneously undergoes cyclization to form 1-pyrroline-5-carboxylate. The protein is Gamma-glutamyl phosphate reductase of Streptococcus sanguinis (strain SK36).